A 388-amino-acid chain; its full sequence is MAAALLLALAFTFLSGQGACAAAGFLKAPMSQEQWAGGSVVLHCEAVGSPMPEIQWWFEGNEPNDSCSQLWDGARLDRVHIHATYRQHAASTLSVDGLAAEDTGTYECRASSDPDRNHLTRPPRVKWVRAQASVVVLEPGTIVTSVQEVDSKTQLTCFLNSSGIDIVGHRWMRGGKVLQEDTLPDLQMKYTVDADDRSGEYSCIFLPEPVGRGNINVEGPPRIKVGKKSEHASEGEFVKLICKSEASHPPVDEWVWFKTSDTGDQTISNGTEANSKYVIISTPELSELIISDLDMNVDPGTYVCNATNSQGSARETISLRVRSRLAALWPFLGIVAEVLVLVTIIFIYEKRRKPDQTLDEDDPGAAPLKGSGSHLNDKDKNVRQRNAT.

A signal peptide spans 1–22 (MAAALLLALAFTFLSGQGACAA). The Extracellular segment spans residues 23 to 326 (AGFLKAPMSQ…ISLRVRSRLA (304 aa)). One can recognise an Ig-like domain in the interval 37–120 (GGSVVLHCEA…SSDPDRNHLT (84 aa)). Disulfide bonds link C44-C108, C157-C203, and C242-C304. The 82-residue stretch at 138-219 (EPGTIVTSVQ…VGRGNINVEG (82 aa)) folds into the Ig-like C2-type domain. N160, N269, and N305 each carry an N-linked (GlcNAc...) asparagine glycan. One can recognise an Ig-like V-type domain in the interval 221 to 320 (PRIKVGKKSE…GSARETISLR (100 aa)). A helical membrane pass occupies residues 327 to 347 (ALWPFLGIVAEVLVLVTIIFI). The Cytoplasmic portion of the chain corresponds to 348-388 (YEKRRKPDQTLDEDDPGAAPLKGSGSHLNDKDKNVRQRNAT). Residues 355-388 (DQTLDEDDPGAAPLKGSGSHLNDKDKNVRQRNAT) form a disordered region. The residue at position 357 (T357) is a Phosphothreonine. S371 carries the post-translational modification Phosphoserine.

In terms of assembly, homooligomer. Interacts with NXNL1, SLC2A1 and SLC16A1/GLUT1. Interacts with XKR8; promoting its localization at the cell membrane. As to quaternary structure, homooligomer. Interacts with SLC16A1; interaction mediates SLC16A1 targeting to the plasma membrane. Interacts with SLC16A3; interaction mediates SLC16A3 targeting to the plasma membrane. Interacts with VEGFA, KDR/VEGFR2, PPIA/CYPA, SLC16A12, SLC16A11, ATP1B2, MAG, L1CAM and AJAP1. Interacts with PPIL2; regulates BSG transport to the cell membrane. Interacts with SLC16A6; this interaction mediates targeting to the plasma membrane. In terms of tissue distribution, expressed in the skeletal muscle, liver, small intestine, kidney, testis, brain, heart and spleen. Also present in various immature cells and endothelia.

Its subcellular location is the cell membrane. It is found in the photoreceptor inner segment. The protein resides in the cell projection. It localises to the cilium. The protein localises to the photoreceptor outer segment. Its subcellular location is the endoplasmic reticulum membrane. It is found in the basolateral cell membrane. In terms of biological role, essential for normal retinal maturation and development. Acts as a retinal cell surface receptor for NXNL1 and plays an important role in NXNL1-mediated survival of retinal cone photoreceptors. In association with glucose transporter SLC16A1/GLUT1 and NXNL1, promotes retinal cone survival by enhancing aerobic glycolysis and accelerating the entry of glucose into photoreceptors. Its function is as follows. Signaling receptor for cyclophilins, essential for PPIA/CYPA and PPIB/CYPB-dependent signaling related to chemotaxis and adhesion of immune cells. Plays an important role in targeting the monocarboxylate transporters SLC16A1/GLUT1 and SLC16A3 to the plasma membrane. Acts as a coreceptor for vascular endothelial growth factor receptor 2 (KDR/VEGFR2) in endothelial cells enhancing its VEGFA-mediated activation and downstream signaling. Promotes angiogenesis through EPAS1/HIF2A-mediated up-regulation of VEGFA and KDR/VEGFR2 in endothelial cells. Plays an important role in spermatogenesis; mediates interactions between germ cells and Sertoli cell and is essential for the development/differentiation of germ cells to round spermatids. The chain is Basigin (Bsg) from Rattus norvegicus (Rat).